A 287-amino-acid polypeptide reads, in one-letter code: MAADAHAPTASEYIVHHLQHLQNIKQKSIIDFSVVNLDSVAVSVILGVLGLFVMWLAARTATSGVPSRFQAAVEMLVEMVDNQAKANIHNAQSRKFIAPLALTVFVWIFLMNAMDLLPVDLLPVLWQVATGDSHAYLRVVPTADLSTTLGLSSAVLILCFVYSIKIKGLGGWAHELVTAPFGTSKNPVFALILGVVNLLMQIIEYVAKTVSHGMRLFGNMYAGELVFMLIALMGGAAAMSLSGVLLPVGHIIAGSIWAIFHILIITLQAFIFMMLTLIYLGQAHEAH.

The next 6 helical transmembrane spans lie at 37–57 (LDSV…MWLA), 96–116 (FIAP…AMDL), 149–169 (LGLS…IKGL), 187–207 (PVFA…EYVA), 224–244 (ELVF…LSGV), and 266–286 (TLQA…AHEA).

This sequence belongs to the ATPase A chain family. F-type ATPases have 2 components, CF(1) - the catalytic core - and CF(0) - the membrane proton channel. CF(1) has five subunits: alpha(3), beta(3), gamma(1), delta(1), epsilon(1). CF(0) has three main subunits: a(1), b(2) and c(9-12). The alpha and beta chains form an alternating ring which encloses part of the gamma chain. CF(1) is attached to CF(0) by a central stalk formed by the gamma and epsilon chains, while a peripheral stalk is formed by the delta and b chains.

It is found in the cell inner membrane. Its function is as follows. Key component of the proton channel; it plays a direct role in the translocation of protons across the membrane. This Acidovorax sp. (strain JS42) protein is ATP synthase subunit a.